The sequence spans 138 residues: Small ribosomal subunit protein uS11c (138 aa).

Residues 1–23 (MAKPILRIGSRKNTRSGSRKNVR) form a disordered region. Over residues 9-23 (GSRKNTRSGSRKNVR) the composition is skewed to basic residues.

Belongs to the universal ribosomal protein uS11 family. In terms of assembly, part of the 30S ribosomal subunit.

It localises to the plastid. Its subcellular location is the chloroplast. This is Small ribosomal subunit protein uS11c from Aethionema grandiflorum (Persian stone-cress).